The sequence spans 360 residues: Dual-specificity RNA methyltransferase RlmN (360 aa).

E93 (proton acceptor) is an active-site residue. The 228-residue stretch at 99–326 (EEDRNTLCIS…VITRSSRGAD (228 aa)) folds into the Radical SAM core domain. The cysteines at positions 106 and 331 are disulfide-linked. Residues C113, C117, and C120 each coordinate [4Fe-4S] cluster. S-adenosyl-L-methionine is bound by residues 158 to 159 (GE), S190, 212 to 214 (SLN), and N288. The active-site S-methylcysteine intermediate is C331.

The protein belongs to the radical SAM superfamily. RlmN family. [4Fe-4S] cluster is required as a cofactor.

The protein resides in the cytoplasm. The catalysed reaction is adenosine(2503) in 23S rRNA + 2 reduced [2Fe-2S]-[ferredoxin] + 2 S-adenosyl-L-methionine = 2-methyladenosine(2503) in 23S rRNA + 5'-deoxyadenosine + L-methionine + 2 oxidized [2Fe-2S]-[ferredoxin] + S-adenosyl-L-homocysteine. It carries out the reaction adenosine(37) in tRNA + 2 reduced [2Fe-2S]-[ferredoxin] + 2 S-adenosyl-L-methionine = 2-methyladenosine(37) in tRNA + 5'-deoxyadenosine + L-methionine + 2 oxidized [2Fe-2S]-[ferredoxin] + S-adenosyl-L-homocysteine. In terms of biological role, specifically methylates position 2 of adenine 2503 in 23S rRNA and position 2 of adenine 37 in tRNAs. m2A2503 modification seems to play a crucial role in the proofreading step occurring at the peptidyl transferase center and thus would serve to optimize ribosomal fidelity. In Geobacter sulfurreducens (strain ATCC 51573 / DSM 12127 / PCA), this protein is Dual-specificity RNA methyltransferase RlmN.